Here is a 118-residue protein sequence, read N- to C-terminus: Small ribosomal subunit protein uS13 (118 aa).

The disordered stretch occupies residues 92 to 118 (RRGLPVRGQRTKTNARTRKGPRKPIKK).

This sequence belongs to the universal ribosomal protein uS13 family. Part of the 30S ribosomal subunit. Forms a loose heterodimer with protein S19. Forms two bridges to the 50S subunit in the 70S ribosome.

Functionally, located at the top of the head of the 30S subunit, it contacts several helices of the 16S rRNA. In the 70S ribosome it contacts the 23S rRNA (bridge B1a) and protein L5 of the 50S subunit (bridge B1b), connecting the 2 subunits; these bridges are implicated in subunit movement. Contacts the tRNAs in the A and P-sites. The polypeptide is Small ribosomal subunit protein uS13 (Yersinia pestis).